Here is a 166-residue protein sequence, read N- to C-terminus: Endoribonuclease YbeY (166 aa).

The Zn(2+) site is built by histidine 132, histidine 136, and histidine 142.

The protein belongs to the endoribonuclease YbeY family. Requires Zn(2+) as cofactor.

The protein localises to the cytoplasm. Its function is as follows. Single strand-specific metallo-endoribonuclease involved in late-stage 70S ribosome quality control and in maturation of the 3' terminus of the 16S rRNA. The protein is Endoribonuclease YbeY of Clostridium botulinum (strain 657 / Type Ba4).